We begin with the raw amino-acid sequence, 423 residues long: Maltoporin 1 (423 aa).

Residues 1–24 form the signal peptide; sequence MITLRKLPIALAVAAGVLSTQAMA.

Belongs to the porin LamB (TC 1.B.3) family. In terms of assembly, homotrimer formed of three 18-stranded antiparallel beta-barrels, containing three independent channels.

It localises to the cell outer membrane. The catalysed reaction is beta-maltose(in) = beta-maltose(out). Functionally, involved in the transport of maltose and maltodextrins. The sequence is that of Maltoporin 1 from Yersinia pestis bv. Antiqua (strain Antiqua).